The sequence spans 235 residues: Orotidine 5'-phosphate decarboxylase (235 aa).

Substrate contacts are provided by residues Asp-10, Lys-33, 60–69 (DLKMSDIPNT), Thr-123, Arg-185, Gln-194, Gly-214, and Arg-215. Catalysis depends on Lys-62, which acts as the Proton donor.

The protein belongs to the OMP decarboxylase family. Type 1 subfamily. As to quaternary structure, homodimer.

It catalyses the reaction orotidine 5'-phosphate + H(+) = UMP + CO2. It participates in pyrimidine metabolism; UMP biosynthesis via de novo pathway; UMP from orotate: step 2/2. Functionally, catalyzes the decarboxylation of orotidine 5'-monophosphate (OMP) to uridine 5'-monophosphate (UMP). This is Orotidine 5'-phosphate decarboxylase from Lactobacillus gasseri (strain ATCC 33323 / DSM 20243 / BCRC 14619 / CIP 102991 / JCM 1131 / KCTC 3163 / NCIMB 11718 / NCTC 13722 / AM63).